A 634-amino-acid chain; its full sequence is MENTITSSTSSPKGRGVNFSTPRGFGSKFKSKCKETFFPDDPFKPISQEPNRLLKTKKLLEYFVPIFEWLPKYDMQKLKYDVLAGITITSLAVPQGISYAKLASIPPIIGLYSSFVPPFVYAVFGSSNNLAVGTVAACSLLIAETFGEEMIKNEPELYLHLIFTATLITGLFQFAMGFLRLGILVDFLSHSTITGFMGGTAIIILLQQLKGIFGLVHFTHKTDVVSVLHSILDNRAEWKWQSTLAGVCFLVFLQSTRYIKQRYPKLFWVSAMGPMVVVVVGCVVAYLVKGTAHGIATVGPLKKGLNPPSIQLLNFDSKYLGMVFKAGIVTGLIALAEGIAIGRSFAVMKNEQTDGNKEMIAFGLMNVIGSFTSCYLTTGPFSKTAVNYNAGTKTPMSNVVMGVCMMLVLLFLAPLFSYTPLVGLSAIIMSAMLGLINYEEMYHLFKVDKFDFLVCMSAFFGVSFLSMDYGLIISVGFSIVRALLYVARPSTCKLGRIPNSVMFRDIEQYPASEEMLGYIILQLGSPVFFANSTYVRERILRWIRDEPEAIEFLLLDLSGVSTIDMTGMETLLEIQRILGSKNIKMVIINPRFEVLEKMMLSHFVEKIGKEYMFLSIDDAVQACRFNLTTTKPEV.

Positions 1-12 (MENTITSSTSSP) are enriched in polar residues. The interval 1–25 (MENTITSSTSSPKGRGVNFSTPRGF) is disordered. Over 1–81 (MENTITSSTS…KYDMQKLKYD (81 aa)) the chain is Cytoplasmic. A helical membrane pass occupies residues 82 to 102 (VLAGITITSLAVPQGISYAKL). The Extracellular segment spans residues 103-104 (AS). The chain crosses the membrane as a helical span at residues 105 to 125 (IPPIIGLYSSFVPPFVYAVFG). Over 126-130 (SSNNL) the chain is Cytoplasmic. The chain crosses the membrane as a helical span at residues 131–151 (AVGTVAACSLLIAETFGEEMI). The Extracellular portion of the chain corresponds to 152–158 (KNEPELY). Residues 159–179 (LHLIFTATLITGLFQFAMGFL) form a helical membrane-spanning segment. Over 180–195 (RLGILVDFLSHSTITG) the chain is Cytoplasmic. A helical transmembrane segment spans residues 196 to 216 (FMGGTAIIILLQQLKGIFGLV). Topologically, residues 217 to 239 (HFTHKTDVVSVLHSILDNRAEWK) are extracellular. A helical membrane pass occupies residues 240 to 260 (WQSTLAGVCFLVFLQSTRYIK). Over 261-265 (QRYPK) the chain is Cytoplasmic. The helical transmembrane segment at 266–286 (LFWVSAMGPMVVVVVGCVVAY) threads the bilayer. Residues 287-321 (LVKGTAHGIATVGPLKKGLNPPSIQLLNFDSKYLG) are Extracellular-facing. Residues 322-342 (MVFKAGIVTGLIALAEGIAIG) form a helical membrane-spanning segment. The Cytoplasmic segment spans residues 343 to 358 (RSFAVMKNEQTDGNKE). A helical membrane pass occupies residues 359-379 (MIAFGLMNVIGSFTSCYLTTG). The Extracellular portion of the chain corresponds to 380–395 (PFSKTAVNYNAGTKTP). A helical membrane pass occupies residues 396 to 416 (MSNVVMGVCMMLVLLFLAPLF). Residues 417–420 (SYTP) lie on the Cytoplasmic side of the membrane. The chain crosses the membrane as a helical span at residues 421–441 (LVGLSAIIMSAMLGLINYEEM). The Extracellular segment spans residues 442–458 (YHLFKVDKFDFLVCMSA). A helical membrane pass occupies residues 459–479 (FFGVSFLSMDYGLIISVGFSI). Residues 480 to 634 (VRALLYVARP…FNLTTTKPEV (155 aa)) are Cytoplasmic-facing. One can recognise an STAS domain in the interval 508–623 (QYPASEEMLG…LSIDDAVQAC (116 aa)).

This sequence belongs to the SLC26A/SulP transporter (TC 2.A.53) family.

The protein resides in the membrane. Functionally, h(+)/sulfate cotransporter that may play a role in the regulation of sulfate assimilation. The sequence is that of Probable sulfate transporter 3.5 (SULTR3;5) from Arabidopsis thaliana (Mouse-ear cress).